The chain runs to 215 residues: Short neuropeptide F (215 aa).

Positions 1 to 22 are cleaved as a signal peptide; the sequence is MCRINFTTLSLILVLWSGSLMS. A propeptide spanning residues 23 to 56 is cleaved from the precursor; that stretch reads EPSQNADGSIKGLYEYLLQREYAAPVSYADHQIK. F69 and F101 each carry phenylalanine amide. A Tryptophan amide modification is found at W129. Position 157 is a phenylalanine amide (F157). Positions 160–215 are excised as a propeptide; the sequence is SDPSWAMFNEHQLDEQQFADATRQPSKTLRGDEPTSIESTEQVESEENSPSNMDEK. The disordered stretch occupies residues 173 to 215; the sequence is DEQQFADATRQPSKTLRGDEPTSIESTEQVESEENSPSNMDEK.

It belongs to the NPY family.

The protein resides in the secreted. In terms of biological role, plays a role in controlling food intake and regulating body size. This chain is Short neuropeptide F, found in Aedes aegypti (Yellowfever mosquito).